A 31-amino-acid polypeptide reads, in one-letter code: Cyclotide vibi-F (31 aa).

Residues 1–31 constitute a cross-link (cyclopeptide (Gly-Asn)); that stretch reads GTIPCGESCVFIPCLTSALGCSCKSKVCYKN. Cystine bridges form between C5–C21, C9–C23, and C14–C28.

Post-translationally, this is a cyclic peptide.

Its function is as follows. Probably participates in a plant defense mechanism. The protein is Cyclotide vibi-F of Viola biflora (Yellow wood violet).